Reading from the N-terminus, the 344-residue chain is sn-glycerol-3-phosphate import ATP-binding protein UgpC 2 (344 aa).

The 231-residue stretch at 4–234 folds into the ABC transporter domain; the sequence is IELIDLKKNY…PETVFVAGFI (231 aa). 36–43 contributes to the ATP binding site; it reads GPSGCGKS.

It belongs to the ABC transporter superfamily. sn-glycerol-3-phosphate importer (TC 3.A.1.1.3) family. In terms of assembly, the complex is composed of two ATP-binding proteins (UgpC), two transmembrane proteins (UgpA and UgpE) and a solute-binding protein (UgpB).

The protein resides in the cell inner membrane. The catalysed reaction is sn-glycerol 3-phosphate(out) + ATP + H2O = sn-glycerol 3-phosphate(in) + ADP + phosphate + H(+). In terms of biological role, part of the ABC transporter complex UgpBAEC involved in sn-glycerol-3-phosphate (G3P) import. Responsible for energy coupling to the transport system. The protein is sn-glycerol-3-phosphate import ATP-binding protein UgpC 2 of Rhizobium johnstonii (strain DSM 114642 / LMG 32736 / 3841) (Rhizobium leguminosarum bv. viciae).